A 194-amino-acid chain; its full sequence is Ras-like protein rasS (194 aa).

10-17 (GPGGVGKS) contacts GTP. Positions 32–40 (YDPTLEDSY) match the Effector region motif. GTP contacts are provided by residues 57–61 (DTAGQ) and 116–119 (NKCD). The interval 168 to 194 (RQSNQHSNSQEQNTDQPIKKKKSCNLL) is disordered. The segment covering 169 to 180 (QSNQHSNSQEQN) has biased composition (low complexity). Cys-191 bears the Cysteine methyl ester mark. A lipid anchor (S-geranylgeranyl cysteine) is attached at Cys-191. Residues 192-194 (NLL) constitute a propeptide, removed in mature form.

This sequence belongs to the small GTPase superfamily. Ras family.

The protein localises to the cell membrane. It catalyses the reaction GTP + H2O = GDP + phosphate + H(+). Functionally, ras proteins bind GDP/GTP and possess intrinsic GTPase activity. The sequence is that of Ras-like protein rasS (rasS) from Dictyostelium discoideum (Social amoeba).